Reading from the N-terminus, the 1651-residue chain is Protein Wiz (1651 aa).

Residues 1–79 (MEGSLAGSLA…TPDGRGPWEH (79 aa)) form a disordered region. Glycyl lysine isopeptide (Lys-Gly) (interchain with G-Cter in SUMO2) cross-links involve residues Ala11, Arg14, Asn29, Gly32, Gly39, Gly42, and Glu258. C2H2-type zinc fingers lie at residues 267 to 289 (FPCI…MSQH), 304 to 326 (LACG…RQLH), and 353 to 375 (LQCP…AKLH). Phe313 is covalently cross-linked (Glycyl lysine isopeptide (Lys-Gly) (interchain with G-Cter in SUMO2)). Positions 376–399 (MREPPGQTTKEPFGGSSGAGSPSP) are disordered. The span at 386-399 (EPFGGSSGAGSPSP) shows a compositional bias: low complexity. A C2H2-type 4 zinc finger spans residues 416 to 439 (SACVFCGFPAPSESLLREHVRLVH). Positions 546–578 (LGRNKSTVHPQGLGERRRPWSEEEEEEEEEEDV) are disordered. Positions 567–578 (EEEEEEEEEEDV) are enriched in acidic residues. C2H2-type zinc fingers lie at residues 701-723 (RKCP…VRGH) and 769-791 (MRCD…ARAH). Residues 819-843 (AEQPPSPLGREPGGPPGSFLTSRRP) form a disordered region. The C2H2-type 7 zinc finger occupies 870–892 (TTCEVCGACFETRKGLSSHARSH). Glycyl lysine isopeptide (Lys-Gly) (interchain with G-Cter in SUMO2) cross-links involve residues Lys883, Lys939, Lys955, Lys967, and Lys988. A disordered region spans residues 972–1038 (FSAKGLGHPP…GPLNLTSGPE (67 aa)). Low complexity predominate over residues 984–994 (PLLKKTPLALA). Ser996 carries the phosphoserine modification. Thr998 carries the post-translational modification Phosphothreonine. Glycyl lysine isopeptide (Lys-Gly) (interchain with G-Cter in SUMO2) cross-links involve residues Lys1000 and Lys1005. Residues Ser1006, Ser1012, Ser1017, and Ser1025 each carry the phosphoserine modification. The interval 1030 to 1034 (PLNLT) is interaction with CTBP1 and CTBP2 1. The segment at 1043–1065 (IRCEFCGEFFENRKGLSSHARSH) adopts a C2H2-type 8 zinc-finger fold. A Glycyl lysine isopeptide (Lys-Gly) (interchain with G-Cter in SUMO2) cross-link involves residue Lys1056. A phosphoserine mark is found at Ser1079 and Ser1106. The segment at 1091-1174 (RTQSRPGGPP…PGLAAPSLPK (84 aa)) is disordered. A compositionally biased stretch (pro residues) spans 1097 to 1106 (GGPPNPPGPS). Residues Lys1108 and Lys1112 each participate in a glycyl lysine isopeptide (Lys-Gly) (interchain with G-Cter in SUMO2) cross-link. A phosphoserine mark is found at Ser1122, Ser1127, and Ser1134. Glycyl lysine isopeptide (Lys-Gly) (interchain with G-Cter in SUMO2) cross-links involve residues Lys1138 and Lys1139. Phosphoserine occurs at positions 1146 and 1151. N6,N6,N6-trimethyllysine; by EHMT2; alternate is present on Lys1162. Residue Lys1162 is modified to N6,N6-dimethyllysine; by EHMT2; alternate. Lys1177 participates in a covalent cross-link: Glycyl lysine isopeptide (Lys-Gly) (interchain with G-Cter in SUMO2). Positions 1214–1218 (PLNLS) are interaction with CTBP1 and CTBP2 2. A C2H2-type 9 zinc finger spans residues 1227–1249 (IRCEFCGEFFENRKGLSSHARSH). A Glycyl lysine isopeptide (Lys-Gly) (interchain with G-Cter in SUMO2) cross-link involves residue Lys1240. Residue Ser1263 is modified to Phosphoserine. Lys1282 participates in a covalent cross-link: Glycyl lysine isopeptide (Lys-Gly) (interchain with G-Cter in SUMO2). The disordered stretch occupies residues 1283-1331 (KEPPAGDLAPALAEDGPPTVAPGPVQSPLPLSPLAGRPGKPGAGPAQVP). A compositionally biased stretch (pro residues) spans 1301-1313 (TVAPGPVQSPLPL). Residues Ser1309 and Ser1314 each carry the phosphoserine modification. Over residues 1315–1328 (PLAGRPGKPGAGPA) the composition is skewed to low complexity. Glycyl lysine isopeptide (Lys-Gly) (interchain with G-Cter in SUMO2) cross-links involve residues Lys1343, Lys1356, Lys1370, Lys1372, and Lys1382. The C2H2-type 10 zinc finger occupies 1397 to 1419 (ACCELCGLYFENRKALASHARAH). Glycyl lysine isopeptide (Lys-Gly) (interchain with G-Cter in SUMO2) cross-links involve residues Lys1448, Lys1464, and Lys1477. Residues 1463-1554 (TKKFRSAGHG…ASAARGGEDT (92 aa)) are disordered. Ser1480 carries the phosphoserine modification. The span at 1481-1493 (LGLAPGGLAVVGR) shows a compositional bias: low complexity. Ser1517 is modified (phosphoserine). Lys1523 participates in a covalent cross-link: Glycyl lysine isopeptide (Lys-Gly) (interchain with G-Cter in SUMO1); alternate. Lys1523 is covalently cross-linked (Glycyl lysine isopeptide (Lys-Gly) (interchain with G-Cter in SUMO2); alternate). The segment covering 1523 to 1541 (KAEEHQRQNINKFERRQAR) has biased composition (basic and acidic residues). Glycyl lysine isopeptide (Lys-Gly) (interchain with G-Cter in SUMO2) cross-links involve residues Lys1534 and Lys1560. Residues 1596-1622 (LKCRFCEVEFQGPLSIQEEWVRHLQRH) form a C2H2-type 11 zinc finger. A disordered region spans residues 1629-1651 (SKADPPPEESQAPQAQTAAAEAP). Lys1630 is covalently cross-linked (Glycyl lysine isopeptide (Lys-Gly) (interchain with G-Cter in SUMO2)). Over residues 1637–1651 (ESQAPQAQTAAAEAP) the composition is skewed to low complexity.

This sequence belongs to the krueppel C2H2-type zinc-finger protein family. In terms of assembly, interacts with EHMT1, EHMT2, CTBP1 and CTBP2. Part of a complex containing at least CDYL, REST, WIZ, SETB1, EHMT1 and EHMT2.

The protein resides in the nucleus. In terms of biological role, may link EHMT1 and EHMT2 histone methyltransferases to the CTBP corepressor machinery. May be involved in EHMT1-EHMT2 heterodimer formation and stabilization. In Homo sapiens (Human), this protein is Protein Wiz (WIZ).